Here is a 197-residue protein sequence, read N- to C-terminus: MSARVDIPADTSAAAKGTAPLIAASTHVKGGYKKGLAIFDLVLRLGAVVTALAAAATMGTTDQTLPFFTQFFQFQASYDDLPTFQFFVIAMAIVSGYLVLSLPFSIVAIIRPHATGPRLLLIILDTVALTLNTAAAAAAVAIVDLAQNGNSSANWLGICQQFGDFCQKASGAVVASFIAAGVLLFLIVISALALRKR.

The Cytoplasmic segment spans residues 1-35 (MSARVDIPADTSAAAKGTAPLIAASTHVKGGYKKG). A helical membrane pass occupies residues 36 to 56 (LAIFDLVLRLGAVVTALAAAA). Residues 57-85 (TMGTTDQTLPFFTQFFQFQASYDDLPTFQ) are Extracellular-facing. Residues 86–106 (FFVIAMAIVSGYLVLSLPFSI) traverse the membrane as a helical segment. At 107–119 (VAIIRPHATGPRL) the chain is on the cytoplasmic side. A helical membrane pass occupies residues 120–140 (LLIILDTVALTLNTAAAAAAV). At 141 to 171 (AIVDLAQNGNSSANWLGICQQFGDFCQKASG) the chain is on the extracellular side. N150 is a glycosylation site (N-linked (GlcNAc...) asparagine). Residues 172–192 (AVVASFIAAGVLLFLIVISAL) traverse the membrane as a helical segment. Topologically, residues 193–197 (ALRKR) are cytoplasmic.

The protein belongs to the Casparian strip membrane proteins (CASP) family. As to quaternary structure, homodimer and heterodimers.

It localises to the cell membrane. Regulates membrane-cell wall junctions and localized cell wall deposition. Required for establishment of the Casparian strip membrane domain (CSD) and the subsequent formation of Casparian strips, a cell wall modification of the root endodermis that determines an apoplastic barrier between the intraorganismal apoplasm and the extraorganismal apoplasm and prevents lateral diffusion. This is Casparian strip membrane protein 3 from Populus trichocarpa (Western balsam poplar).